The following is a 68-amino-acid chain: Large ribosomal subunit protein bL35 (68 aa).

Composition is skewed to basic residues over residues 1 to 11 (MPKLKTRSSAK) and 19 to 29 (SGKVKHGKAFA). A disordered region spans residues 1 to 54 (MPKLKTRSSAKKRFDVKKSGKVKHGKAFAKHLFTFSKTPKSKRSNRGTGHLRDM).

This sequence belongs to the bacterial ribosomal protein bL35 family.

This Myxococcus xanthus (strain DK1622) protein is Large ribosomal subunit protein bL35.